A 357-amino-acid polypeptide reads, in one-letter code: MSSPEKFSPAPESNSNPSLPDALIISCIARVSRLYYPILSFVSKSFRSLLASPELYKERSLLNRTEGCLYVCLYLNPFESPSWFTLCLKPDQALSSETSNKKKSSGYVLATVSIPHPRLVQRSSLVAVGSNIYNIGRSISPYSSVSIFDCRSHTWREAPSLPVELVEVSAGVLDGKIYVAGSCKDGDSLNLKNTFEVFDTKTQVWDHVPIPYNETKHNIYSKSLCIDEKWYVGAKRKVVSYNPKKGIWDLVESEMCSYKSSYDYCEIENVLYSVEKTWRGTVFRWYDTELGRWRKLEGLNMPYSGTGDRGGKKMIWCAVITLERRKNSGIWGNVEWFAHVLTVPKTFVFQKFLAATV.

The F-box domain maps to 14–61 (NSNPSLPDALIISCIARVSRLYYPILSFVSKSFRSLLASPELYKERSL). 4 Kelch repeats span residues 131–175 (NIYN…VLDG), 177–224 (IYVA…SKSL), 226–267 (IDEK…YCEI), and 268–313 (ENVL…GGKK).

In Arabidopsis thaliana (Mouse-ear cress), this protein is Putative F-box/kelch-repeat protein At5g38680.